The primary structure comprises 270 residues: DNA packaging protein OPG160 (270 aa).

25–32 (GGSGSGKT) serves as a coordination point for ATP.

This sequence belongs to the orthopoxvirus OPG160 protein family. Interacts with protein OPG137.

Functionally, participates in viral DNA packaging and virion morphogenesis. The polypeptide is DNA packaging protein OPG160 (OPG160) (Variola virus (isolate Human/India/Ind3/1967) (VARV)).